The primary structure comprises 448 residues: Enolase (448 aa).

Residue glutamine 164 participates in (2R)-2-phosphoglycerate binding. Residue glutamate 206 is the Proton donor of the active site. Mg(2+)-binding residues include aspartate 243, glutamate 289, and aspartate 316. Positions 341, 370, 371, and 392 each coordinate (2R)-2-phosphoglycerate. The active-site Proton acceptor is lysine 341.

Belongs to the enolase family. It depends on Mg(2+) as a cofactor.

The protein localises to the cytoplasm. It localises to the secreted. It is found in the cell surface. The enzyme catalyses (2R)-2-phosphoglycerate = phosphoenolpyruvate + H2O. It functions in the pathway carbohydrate degradation; glycolysis; pyruvate from D-glyceraldehyde 3-phosphate: step 4/5. Catalyzes the reversible conversion of 2-phosphoglycerate (2-PG) into phosphoenolpyruvate (PEP). It is essential for the degradation of carbohydrates via glycolysis. In Oenococcus oeni (strain ATCC BAA-331 / PSU-1), this protein is Enolase.